Reading from the N-terminus, the 279-residue chain is MDFDDHDDGDEEMPPMPVSSSYETPPQHGLAGGGMAPKPPGEIGSHVKGPSCGGGRYRECLKNHAVGIGGHAVDGCGEFMAAGEEGTIDALRCAACNCHRNFHRKESESLAGEGSPFSPAAVVPYGATPHHQFSPYYRTPAGYLHHHQHHMAAAAAAAAAAAGGHPQRPLALPSTSHSGRDDGDDLSGMVGPMSAVGPLSGMSLGAGPSGSGSGKKRFRTKFTQEQKDKMLAFAERVGWRIQKHDEAAVQQFCDEVGVKRHVLKVWMHNNKHTLGKKLP.

Residues 1-13 (MDFDDHDDGDEEM) are compositionally biased toward acidic residues. Residues 1–47 (MDFDDHDDGDEEMPPMPVSSSYETPPQHGLAGGGMAPKPPGEIGSHV) are disordered. Residues 57–106 (YRECLKNHAVGIGGHAVDGCGEFMAAGEEGTIDALRCAACNCHRNFHRKE) form a ZF-HD dimerization-type; degenerate zinc finger. The segment at 157–191 (AAAAAAGGHPQRPLALPSTSHSGRDDGDDLSGMVG) is disordered. The homeobox DNA-binding region spans 215–278 (KKRFRTKFTQ…NNKHTLGKKL (64 aa)).

In terms of assembly, homo- and heterodimer with other ZFHD proteins.

The protein resides in the nucleus. Its function is as follows. Putative transcription factor. The protein is Zinc-finger homeodomain protein 1 (ZHD1) of Oryza sativa subsp. indica (Rice).